We begin with the raw amino-acid sequence, 379 residues long: Putative phosphatidate phosphatase (379 aa).

Positions 1 to 53 are disordered; the sequence is MPAVKIIMSTETSASETTPLRRSENETPDHKELAQSNSNSRQTTVNSNNNNYS. Residues 9–18 show a composition bias toward polar residues; it reads STETSASETT. Over residues 19-33 the composition is skewed to basic and acidic residues; it reads PLRRSENETPDHKEL. The segment covering 35–53 has biased composition (low complexity); it reads QSNSNSRQTTVNSNNNNYS. An N-linked (GlcNAc...) asparagine glycan is attached at asparagine 51. 2 helical membrane-spanning segments follow: residues 90–110 and 138–158; these read VGLD…FFLL and MLYF…EVII. The N-linked (GlcNAc...) asparagine glycan is linked to asparagine 169. The next 2 membrane-spanning stretches (helical) occupy residues 266 to 286 and 330 to 350; these read SFPS…ALYL and AGSL…SDLF.

The protein belongs to the PA-phosphatase related phosphoesterase family. As to quaternary structure, homodimer. This complex seems not to be involved in substrate recognition, it may confer only structural or functional stability. Expressed in embryonic gut in a pattern that guides germ cells towards mesoderm (initially in hindgut and then on lower side of gut). During extended germ band stage, expressed in ectoderm as a medial band throughout the trunk.

It is found in the membrane. It carries out the reaction a 1,2-diacyl-sn-glycero-3-phosphate + H2O = a 1,2-diacyl-sn-glycerol + phosphate. In terms of biological role, responsible for guiding the germ cells early in the process of migration from the lumen of the developing gut towards the overlying mesoderm, where the germ cells enter the gonads. May be involved in lipid metabolism. The sequence is that of Putative phosphatidate phosphatase (wun) from Drosophila melanogaster (Fruit fly).